A 326-amino-acid chain; its full sequence is Probable cell division protein WhiA (326 aa).

A DNA-binding region (H-T-H motif) is located at residues serine 275–valine 308.

Belongs to the WhiA family.

Involved in cell division and chromosome segregation. The protein is Probable cell division protein WhiA of Clavibacter michiganensis subsp. michiganensis (strain NCPPB 382).